A 376-amino-acid chain; its full sequence is TraB domain-containing protein (376 aa).

Met1 is modified (N-acetylmethionine). Thr64 is subject to Phosphothreonine.

The sequence is that of TraB domain-containing protein (Trabd) from Mus musculus (Mouse).